We begin with the raw amino-acid sequence, 182 residues long: ATP-dependent protease subunit HslV (182 aa).

The active site involves threonine 2. Na(+) contacts are provided by glycine 157, cysteine 160, and threonine 163.

Belongs to the peptidase T1B family. HslV subfamily. A double ring-shaped homohexamer of HslV is capped on each side by a ring-shaped HslU homohexamer. The assembly of the HslU/HslV complex is dependent on binding of ATP.

Its subcellular location is the cytoplasm. The enzyme catalyses ATP-dependent cleavage of peptide bonds with broad specificity.. Its activity is regulated as follows. Allosterically activated by HslU binding. Protease subunit of a proteasome-like degradation complex believed to be a general protein degrading machinery. The polypeptide is ATP-dependent protease subunit HslV (Sodalis glossinidius (strain morsitans)).